We begin with the raw amino-acid sequence, 898 residues long: MFKEIFTRLIRHLPSRLVHRDPLPGAQQTVNTVVPPSLSAHCLKMAVMPEEELWKTFDTHPEGLNQAEVESAREQHGENKLPAQQPSPWWVHLWVCYRNPFNILLTILGAISYATEDLFAAGVIALMVAISTLLNFIQEARSTKAADALKAMVSNTATVLRVINDKGENGWLEIPIDQLVPGDIIKLAAGDMIPADLRILQARDLFVAQASLTGESLPVEKAATTRQPEHSNPLECDTLCFMGTTVVSGTAQAMVIATGANTWFGQLAGRVSEQESEPNAFQQGISRVSMLLIRFMLVMAPVVLLINGYTKGDWWEAALFALSVAVGLTPEMLPMIVTSTLARGAVKLSKQKVIVKHLDAIQNFGAMDILCTDKTGTLTQDKIVLENHTDISGKTSERVLHSAWLNSHYQTGLKNLLDTAVLEGTDEESARSLASRWQKIDEIPFDFERRRMSVVVAENTEHHQLVCKGALQEILNVCSQVRHNGEIVPLDDIMLRKIKRVTDTLNRQGLRVVAVATKYLPAREGDYQRADESDLILEGYIAFLDPPKETTAPALKALKASGITVKILTGDSELVAAKVCHEVGLDAGEVVIGSDIETLSDDELANLAQRTTLFARLTPMHKERIVTLLKREGHVVGFMGDGINDAPALRAADIGISVDGAVDIAREAADIILLEKSLMVLEEGVIEGRRTFANMLKYIKMTASSNFGNVFSVLVASAFLPFLPMLPLHLLIQNLLYDVSQVAIPFDNVDDEQIQKPQRWNPADLGRFMIFFGPISSIFDILTFCLMWWVFHANTPETQTLFQSGWFVVGLLSQTLIVHMIRTRRVPFIQSCASWPLMIMTVIVMIVGIALPFSPLASYLQLQALPLSYFPWLVAILAGYMTLTQLVKGFYSRRYGWQ.

Over 1–94 (MFKEIFTRLI…QPSPWWVHLW (94 aa)) the chain is Cytoplasmic. The chain crosses the membrane as a helical span at residues 95–115 (VCYRNPFNILLTILGAISYAT). Position 116 (E116) is a topological domain, extracellular. A helical membrane pass occupies residues 117-137 (DLFAAGVIALMVAISTLLNFI). Residues 138–287 (QEARSTKAAD…PNAFQQGISR (150 aa)) are Cytoplasmic-facing. A helical transmembrane segment spans residues 288–308 (VSMLLIRFMLVMAPVVLLING). The Extracellular portion of the chain corresponds to 309–317 (YTKGDWWEA). Residues 318–335 (ALFALSVAVGLTPEMLPM) form a helical membrane-spanning segment. A Mg(2+)-binding site is contributed by E331. Residues 336–695 (IVTSTLARGA…IEGRRTFANM (360 aa)) are Cytoplasmic-facing. D373 serves as the catalytic 4-aspartylphosphate intermediate. Mg(2+) is bound by residues D641, D645, and N709. The chain crosses the membrane as a helical span at residues 696-715 (LKYIKMTASSNFGNVFSVLV). Residues 716-724 (ASAFLPFLP) are Extracellular-facing. A helical transmembrane segment spans residues 725 to 744 (MLPLHLLIQNLLYDVSQVAI). Mg(2+)-binding residues include N734 and D738. Residues 745 to 766 (PFDNVDDEQIQKPQRWNPADLG) are Cytoplasmic-facing. Residues 767–790 (RFMIFFGPISSIFDILTFCLMWWV) traverse the membrane as a helical segment. Residues 791-799 (FHANTPETQ) lie on the Extracellular side of the membrane. The chain crosses the membrane as a helical span at residues 800–818 (TLFQSGWFVVGLLSQTLIV). Topologically, residues 819–831 (HMIRTRRVPFIQS) are cytoplasmic. Residues 832 to 851 (CASWPLMIMTVIVMIVGIAL) traverse the membrane as a helical segment. The Extracellular segment spans residues 852–866 (PFSPLASYLQLQALP). Residues 867–886 (LSYFPWLVAILAGYMTLTQL) traverse the membrane as a helical segment. At 887 to 898 (VKGFYSRRYGWQ) the chain is on the cytoplasmic side.

Belongs to the cation transport ATPase (P-type) (TC 3.A.3) family. Type IIIB subfamily.

The protein localises to the cell inner membrane. The enzyme catalyses Mg(2+)(out) + ATP + H2O = Mg(2+)(in) + ADP + phosphate + H(+). Mediates magnesium influx to the cytosol. The sequence is that of Magnesium-transporting ATPase, P-type 1 (mgtA) from Escherichia coli O157:H7.